The chain runs to 525 residues: Probable histidine ammonia-lyase (525 aa).

The 5-imidazolinone (Ala-Gly) cross-link spans 145–147; sequence ASG. Serine 146 carries the post-translational modification 2,3-didehydroalanine (Ser).

The protein belongs to the PAL/histidase family. In terms of processing, contains an active site 4-methylidene-imidazol-5-one (MIO), which is formed autocatalytically by cyclization and dehydration of residues Ala-Ser-Gly.

The protein localises to the cytoplasm. It catalyses the reaction L-histidine = trans-urocanate + NH4(+). Its pathway is amino-acid degradation; L-histidine degradation into L-glutamate; N-formimidoyl-L-glutamate from L-histidine: step 1/3. The polypeptide is Probable histidine ammonia-lyase (Halobacterium salinarum (strain ATCC 29341 / DSM 671 / R1)).